Here is a 414-residue protein sequence, read N- to C-terminus: Tryptophan synthase beta chain (414 aa).

Lys-105 is subject to N6-(pyridoxal phosphate)lysine.

Belongs to the TrpB family. As to quaternary structure, tetramer of two alpha and two beta chains. Pyridoxal 5'-phosphate is required as a cofactor.

The enzyme catalyses (1S,2R)-1-C-(indol-3-yl)glycerol 3-phosphate + L-serine = D-glyceraldehyde 3-phosphate + L-tryptophan + H2O. It functions in the pathway amino-acid biosynthesis; L-tryptophan biosynthesis; L-tryptophan from chorismate: step 5/5. The beta subunit is responsible for the synthesis of L-tryptophan from indole and L-serine. In Gloeobacter violaceus (strain ATCC 29082 / PCC 7421), this protein is Tryptophan synthase beta chain.